The following is a 1077-amino-acid chain: Ubiquitin-activating enzyme E1 2 (1077 aa).

The segment at 16–36 is disordered; the sequence is SPMKKRRIDHTESADGSAINA. Residues Ala499, Asp525, Arg536, Lys549, and 597–598 contribute to the ATP site; that span reads DN. The active-site Glycyl thioester intermediate is the Cys653.

This sequence belongs to the ubiquitin-activating E1 family. As to quaternary structure, monomer. In terms of tissue distribution, expressed in leaves, flowers, roots and stems. Detected in germinating seeds, cotyledons, hypocotyls, vascular tissues, anthers, filaments, pollen, style, stigma, sepals, petals, ovary, developing ovules, funiculi and silique walls.

It carries out the reaction ATP + ubiquitin + [E1 ubiquitin-activating enzyme]-L-cysteine = AMP + diphosphate + S-ubiquitinyl-[E1 ubiquitin-activating enzyme]-L-cysteine.. It functions in the pathway protein modification; protein ubiquitination. Functionally, activates ubiquitin by first adenylating its C-terminal glycine residue with ATP, and thereafter linking this residue to the side chain of a cysteine residue in E1, yielding a ubiquitin-E1 thioester and free AMP. In Arabidopsis thaliana (Mouse-ear cress), this protein is Ubiquitin-activating enzyme E1 2 (UBA2).